Here is a 209-residue protein sequence, read N- to C-terminus: Imidazoleglycerol-phosphate dehydratase (209 aa).

It belongs to the imidazoleglycerol-phosphate dehydratase family.

Its subcellular location is the cytoplasm. The enzyme catalyses D-erythro-1-(imidazol-4-yl)glycerol 3-phosphate = 3-(imidazol-4-yl)-2-oxopropyl phosphate + H2O. Its pathway is amino-acid biosynthesis; L-histidine biosynthesis; L-histidine from 5-phospho-alpha-D-ribose 1-diphosphate: step 6/9. The protein is Imidazoleglycerol-phosphate dehydratase of Nostoc sp. (strain PCC 7120 / SAG 25.82 / UTEX 2576).